The chain runs to 76 residues: Large ribosomal subunit protein bL31 (76 aa).

This sequence belongs to the bacterial ribosomal protein bL31 family. Type A subfamily. Part of the 50S ribosomal subunit.

Its function is as follows. Binds the 23S rRNA. This Rhizorhabdus wittichii (strain DSM 6014 / CCUG 31198 / JCM 15750 / NBRC 105917 / EY 4224 / RW1) (Sphingomonas wittichii) protein is Large ribosomal subunit protein bL31.